The following is a 122-amino-acid chain: Large ribosomal subunit protein uL14 (122 aa).

It belongs to the universal ribosomal protein uL14 family. As to quaternary structure, part of the 50S ribosomal subunit. Forms a cluster with proteins L3 and L19. In the 70S ribosome, L14 and L19 interact and together make contacts with the 16S rRNA in bridges B5 and B8.

Its function is as follows. Binds to 23S rRNA. Forms part of two intersubunit bridges in the 70S ribosome. The sequence is that of Large ribosomal subunit protein uL14 from Afipia carboxidovorans (strain ATCC 49405 / DSM 1227 / KCTC 32145 / OM5) (Oligotropha carboxidovorans).